The chain runs to 333 residues: Terminal uridylyltransferase 4 (333 aa).

UTP contacts are provided by residues Ser54 and Ser65 to Asp68. Mg(2+) is bound by residues Asp66 and Asp68. An RNA-binding site is contributed by Arg121. UTP-binding positions include Gly144–Ser148, Lys169, Lys173, and Ser188–Tyr189. The PAP-associated domain maps to Leu237–Asn302.

This sequence belongs to the DNA polymerase type-B-like family. As to quaternary structure, monomer. Mg(2+) serves as cofactor. Requires Mn(2+) as cofactor.

It catalyses the reaction RNA(n) + UTP = RNA(n)-3'-uridine ribonucleotide + diphosphate. The 3' uridylated RNA substrate is involved in the selective incorporation of UTP; UTP binding is favored due to the constraint posed on the positioning of the NTP base by the continuous stacking interactions between Tyr-189 side chain, the bound NTP, and the terminal nucleoside base of the RNA substrate. Functionally, terminal uridylyltransferase which, specifically, catalyzes the addition of Us to the 3'-hydroxyl group of single-stranded RNAs with a 3'-terminal U. The protein is Terminal uridylyltransferase 4 of Trypanosoma brucei brucei (strain 927/4 GUTat10.1).